The following is a 38-amino-acid chain: Large ribosomal subunit protein bL36A (38 aa).

Belongs to the bacterial ribosomal protein bL36 family.

This chain is Large ribosomal subunit protein bL36A, found in Pseudomonas aeruginosa (strain UCBPP-PA14).